The chain runs to 205 residues: MSKYRGPRLRLVRKLGKLPGLTSKISKKTNTPGEHGQPQNKLLKNRSPYGLRLLEKQKLRFNYNITERQLLRYVKQAKNLTGSTGEILLAILEMRLDNIVYRLGMAPTIVAARQLVSHGHILVNKQKVNIPSYPCQLKEVISVKDKKASRDLVKKFVQESAVNPVPSHLSFNKENLVGIVNNVATREWIGLQINELLVIEYYSRN.

A disordered region spans residues 22 to 42; it reads TSKISKKTNTPGEHGQPQNKL. A compositionally biased stretch (polar residues) spans 28-42; sequence KTNTPGEHGQPQNKL. Residues 94-157 enclose the S4 RNA-binding domain; sequence MRLDNIVYRL…ASRDLVKKFV (64 aa).

The protein belongs to the universal ribosomal protein uS4 family. In terms of assembly, part of the 30S ribosomal subunit. Contacts protein S5. The interaction surface between S4 and S5 is involved in control of translational fidelity.

It localises to the plastid. The protein resides in the chloroplast. Its function is as follows. One of the primary rRNA binding proteins, it binds directly to 16S rRNA where it nucleates assembly of the body of the 30S subunit. In terms of biological role, with S5 and S12 plays an important role in translational accuracy. In Tupiella akineta (Green alga), this protein is Small ribosomal subunit protein uS4c (rps4).